A 625-amino-acid polypeptide reads, in one-letter code: Probable potassium transport system protein Kup 2 (625 aa).

The next 12 helical transmembrane spans lie at 10-30 (LAALTLGAMGVVYGDIGTSPL), 47-67 (GVHLIGAVSVIFWGLMMVVTL), 104-124 (VLLLMGVFGAALFYGDSVITP), 140-160 (PAFKSYVLPISVTVLIGLFAV), 172-192 (FGPVIMLWFAVLSVTGVAEII), 214-234 (GWHMFVAVGAIVLAFTGVEAL), 250-270 (WLGLVLPALAINYMGQGALLM), 283-303 (LFPQAWLMPAVVLATLATVIA), 347-367 (WLLLISVLLAVVGFGSSSALA), 369-389 (AYGIAVTMTMLITTALTFFVV), 396-416 (PLPVALAATAVFLALDTLLVV), and 422-442 (FFQGGWFPLVLGLVIFTVMAT).

It belongs to the HAK/KUP transporter (TC 2.A.72) family.

The protein localises to the cell inner membrane. It catalyses the reaction K(+)(in) + H(+)(in) = K(+)(out) + H(+)(out). Its function is as follows. Transport of potassium into the cell. Likely operates as a K(+):H(+) symporter. The sequence is that of Probable potassium transport system protein Kup 2 from Albidiferax ferrireducens (strain ATCC BAA-621 / DSM 15236 / T118) (Rhodoferax ferrireducens).